The chain runs to 590 residues: MGQIKKKHTAGAARNFITRTQAIRKLQVSLADFRRLCIFKGIYPREPRSKKKANKGSTAPVTFYYAKDIQYLLHEPVLDKFREHKTFAKKLTRALGRGDLHDAKRIDENRPRYHLDHIIKERYPTFMDALRDIDDALSMLFLFAALPASDDVSARLVSEAEAICTQWMAFVARERLVRKVFVSIKGVYYSANIRGVEVMWLVPFRFPQNIPADIDFRVMLTFLEFYTTLLHFVLYKLYNENGLVFPPIINSTKLSGVGGINAYVLESRQNAGVVPQIEGNSEAKVENVSAAVLSKAAKADAGEEEEVEEEEEVEDDGLDSFSAEKGDALAQPTFNSTAGQLFSNFTIFIGREVPLDIIEFLIIAFGGKVISESAMDELIDNEDETRGNVIDEKTLKQKFNLASVTHQITDRPTLREKVPGRTYVQPQWVFDSINEGKLLPVSEYAPGERLPAHLSPWGDAGTYDPTADVSDASDDDEDDEDIEVAPEDYDKDDEEEEAEAEAKQHQRELEAEAKGTKADPAAAPKKAKRKADKMTKAEKQEEEDKKLRMIMMSNKQKKLYKKMQYSNDKKSDREAELKKRRKLNEKKEKR.

The disordered stretch occupies residues 297–318 (AKADAGEEEEVEEEEEVEDDGL). The segment covering 302–318 (GEEEEVEEEEEVEDDGL) has biased composition (acidic residues). In terms of domain architecture, BRCT spans 337 to 446 (TAGQLFSNFT…KLLPVSEYAP (110 aa)). The segment at 452–590 (AHLSPWGDAG…RKLNEKKEKR (139 aa)) is disordered. Residues 471 to 499 (DASDDDEDDEDIEVAPEDYDKDDEEEEAE) show a composition bias toward acidic residues. Residues 489-589 (YDKDDEEEEA…RRKLNEKKEK (101 aa)) are a coiled coil. Composition is skewed to basic and acidic residues over residues 500 to 517 (AEAK…KGTK), 532 to 547 (DKMT…DKKL), and 567 to 577 (NDKKSDREAEL).

The protein belongs to the pescadillo family. As to quaternary structure, component of the NOP7 complex, composed of ERB1, NOP7 and YTM1. The complex is held together by ERB1, which interacts with NOP7 via its N-terminal domain and with YTM1 via a high-affinity interaction between the seven-bladed beta-propeller domains of the 2 proteins. The NOP7 complex associates with the 66S pre-ribosome.

The protein localises to the nucleus. It is found in the nucleolus. It localises to the nucleoplasm. Component of the NOP7 complex, which is required for maturation of the 25S and 5.8S ribosomal RNAs and formation of the 60S ribosome. The protein is Pescadillo homolog of Yarrowia lipolytica (strain CLIB 122 / E 150) (Yeast).